Reading from the N-terminus, the 323-residue chain is tRNA uridine(34) hydroxylase (323 aa).

The region spanning 123-217 is the Rhodanese domain; sequence SDPDVVVIDT…YLETIPEEES (95 aa). C177 serves as the catalytic Cysteine persulfide intermediate.

Belongs to the TrhO family.

It carries out the reaction uridine(34) in tRNA + AH2 + O2 = 5-hydroxyuridine(34) in tRNA + A + H2O. Functionally, catalyzes oxygen-dependent 5-hydroxyuridine (ho5U) modification at position 34 in tRNAs. This is tRNA uridine(34) hydroxylase from Methylobacillus flagellatus (strain ATCC 51484 / DSM 6875 / VKM B-1610 / KT).